The following is a 150-amino-acid chain: MNESIDINQIFTLLPHRYPFILVDRVIDYKVMEYLIAIKNVTINENFFTGHFPGNPIMPGVLMLEALAQACAILASLSRQPKEGHEFLHYFAGIDNARFKQVVTPGDQLRLEVRLAGQKRDFWRMHGEAYIGDKLACSADLLSAAKEIKK.

Histidine 51 is a catalytic residue.

The protein belongs to the thioester dehydratase family. FabZ subfamily.

It is found in the cytoplasm. It carries out the reaction a (3R)-hydroxyacyl-[ACP] = a (2E)-enoyl-[ACP] + H2O. In terms of biological role, involved in unsaturated fatty acids biosynthesis. Catalyzes the dehydration of short chain beta-hydroxyacyl-ACPs and long chain saturated and unsaturated beta-hydroxyacyl-ACPs. The sequence is that of 3-hydroxyacyl-[acyl-carrier-protein] dehydratase FabZ from Legionella pneumophila subsp. pneumophila (strain Philadelphia 1 / ATCC 33152 / DSM 7513).